The sequence spans 448 residues: Nicotinate phosphoribosyltransferase pncB1 (448 aa).

Residues 1–21 (MGPPPAARRREGEPDNQDPAG) form a disordered region. At His212 the chain carries Phosphohistidine. The disordered stretch occupies residues 353 to 372 (RSSYKESPGGRKEALRRSRA).

The protein belongs to the NAPRTase family. In terms of processing, transiently phosphorylated on a His residue during the reaction cycle. Phosphorylation strongly increases the affinity for substrates and increases the rate of nicotinate D-ribonucleotide production. Dephosphorylation regenerates the low-affinity form of the enzyme, leading to product release.

It carries out the reaction nicotinate + 5-phospho-alpha-D-ribose 1-diphosphate + ATP + H2O = nicotinate beta-D-ribonucleotide + ADP + phosphate + diphosphate. Its pathway is cofactor biosynthesis; NAD(+) biosynthesis; nicotinate D-ribonucleotide from nicotinate: step 1/1. Its function is as follows. Involved in the Preiss-Handler pathway, which is a recycling route that permits the salvage of free nicotinamide (NM) and nicotinic acid (Na) involved in the NAD biosynthesis. Catalyzes the synthesis of beta-nicotinate D-ribonucleotide from nicotinate and 5-phospho-D-ribose 1-phosphate at the expense of ATP. It is not able to use nicotinamide. PncB1 contributes to basal NAD level. The protein is Nicotinate phosphoribosyltransferase pncB1 (pncB1) of Mycobacterium tuberculosis (strain CDC 1551 / Oshkosh).